A 223-amino-acid polypeptide reads, in one-letter code: Serine/threonine/tyrosine-interacting protein A (223 aa).

The Tyrosine-protein phosphatase domain occupies 28–176; the sequence is EMQEILPGLF…LQEYEAIYLA (149 aa).

This sequence belongs to the protein-tyrosine phosphatase family. Non-receptor class subfamily.

Catalytically inactive phosphatase. This is Serine/threonine/tyrosine-interacting protein A (styx-a) from Xenopus laevis (African clawed frog).